The chain runs to 482 residues: Lipoamide acyltransferase component of branched-chain alpha-keto acid dehydrogenase complex, mitochondrial (482 aa).

A mitochondrion-targeting transit peptide spans 1–61 (MAAARVLRTW…HSLRTAAVLQ (61 aa)). A Lipoyl-binding domain is found at 64 to 139 (VVQFKLSDIG…YVGKPLIDIE (76 aa)). Residue K105 is modified to N6-lipoyllysine. The residue at position 133 (K133) is an N6-succinyllysine. Positions 145-160 (DSEEDVVETPAVSHDE) are critical for association with PPM1K. Positions 172–209 (LATPAVRRLAMENNIKLSEVVGSGKDGRILKEDILSFL) constitute a Peripheral subunit-binding (PSBD) domain. At K196 the chain carries N6-acetyllysine; alternate. K196 is subject to N6-succinyllysine; alternate. Position 202 is an N6-acetyllysine (K202). The disordered stretch occupies residues 217 to 252 (LPPSPKSEITPPPPQPKDRTFPTPIAKPPVFTGKDR). Residues 218-231 (PPSPKSEITPPPPQ) are compositionally biased toward pro residues. S220 carries the post-translational modification Phosphoserine. N6-acetyllysine occurs at positions 243 and 250. K261 carries the N6-succinyllysine modification. At K289 the chain carries N6-acetyllysine; alternate. K289 is modified (N6-succinyllysine; alternate). R291 is a binding site for CoA. 2 positions are modified to N6-acetyllysine: K295 and K304. Positions 306, 349, 378, 399, 400, 403, 424, and 426 each coordinate CoA. K435 bears the N6-acetyllysine mark. Position 440 is an N6-acetyllysine; alternate (K440). Position 440 is an N6-succinyllysine; alternate (K440). Residues H452 and D456 contribute to the active site.

This sequence belongs to the 2-oxoacid dehydrogenase family. Forms a 24-polypeptide structural core with octahedral symmetry that represents the E2 component of the branched-chain alpha-ketoacid dehydrogenase (BCKDH) complex. The BCKDH complex is composed of three major building blocks E1, E2 and E3. It is organized around E2, a 24-meric cubic core composed of DBT, to which are associated 6 to 12 copies of E1, and approximately 6 copies of the dehydrogenase E3, a DLD dimer. Interacts with PPM1K with a 24:1 stoichiometry; the N-terminal region (residues 49-61) of PPM1K and C-terminal linker of the lipoyl domain of DBT/E2 (residues 145-160) are critical for this interaction whereas the lipoyl prosthetic group is dispensable. This interaction requires colocalization in mitochondria. PPM1K competes with BCKDK for binding to DBT; this interaction is modulated by branched-chain alpha-keto acids (BCKAs). At steady state, BCKDH holoenzyme preferentially binds BCKDK and BCKDHA is phosphorylated. In response to high levels of BCKAs, BCKDK is replaced by PPM1K leading to BCKDHA dephosphorylation. The cofactor is (R)-lipoate.

It is found in the mitochondrion matrix. The enzyme catalyses N(6)-[(R)-dihydrolipoyl]-L-lysyl-[protein] + 2-methylpropanoyl-CoA = N(6)-[(R)-S(8)-2-methylpropanoyldihydrolipoyl]-L-lysyl-[protein] + CoA. Its function is as follows. The branched-chain alpha-keto dehydrogenase complex catalyzes the overall conversion of alpha-keto acids to acyl-CoA and CO(2). It contains multiple copies of three enzymatic components: branched-chain alpha-keto acid decarboxylase (E1), lipoamide acyltransferase (E2) and lipoamide dehydrogenase (E3). Within this complex, the catalytic function of this enzyme is to accept, and to transfer to coenzyme A, acyl groups that are generated by the branched-chain alpha-keto acid decarboxylase component. The chain is Lipoamide acyltransferase component of branched-chain alpha-keto acid dehydrogenase complex, mitochondrial (Dbt) from Mus musculus (Mouse).